Here is a 393-residue protein sequence, read N- to C-terminus: SH3 domain-binding protein 5-like (393 aa).

The interval 1–58 (MAELRQVPGGRETPQGELRPEVVEDEVPRSPVAEEPGGGGSSSSEAKLSPREEEELDP) is disordered. Residue T13 is modified to Phosphothreonine. Basic and acidic residues predominate over residues 18–28 (LRPEVVEDEVP). Residues S30 and S49 each carry the phosphoserine modification. 2 coiled-coil regions span residues 59 to 140 (RIQE…YERA) and 169 to 272 (WQEM…EQIH). Residues 273–332 (ARRRGGLPPHPLGPRRSSPVGAEAGPEDMEDGDSGIEGAEGAGLEEGSSLGPGPAPDTDT) form a disordered region. Over residues 297–306 (GPEDMEDGDS) the composition is skewed to acidic residues. Low complexity predominate over residues 317–332 (EEGSSLGPGPAPDTDT). A phosphoserine mark is found at S343, S350, S358, S362, and S378. Residues 362 to 393 (SLDGQELGTRSGGRRGSDGGARGGRHQRSVSL) are disordered. Over residues 384 to 393 (GGRHQRSVSL) the composition is skewed to basic residues.

Belongs to the SH3BP5 family.

In terms of biological role, functions as a guanine nucleotide exchange factor (GEF) for RAB11A. The protein is SH3 domain-binding protein 5-like (SH3BP5L) of Homo sapiens (Human).